Consider the following 256-residue polypeptide: Follistatin-related protein 3 (256 aa).

Positions 1–23 (MRSGALWPLLWGALVWTVGSVGA) are cleaved as a signal peptide. The region spanning 34 to 105 (GVCWLQQGRE…SCDGVECGPG (72 aa)) is the TB domain. Disulfide bonds link Cys36/Cys59, Cys46/Cys90, Cys60/Cys93, Cys97/Cys108, Cys102/Cys117, Cys119/Cys151, Cys123/Cys144, and Cys133/Cys165. The N-linked (GlcNAc...) asparagine glycan is linked to Asn71. Residues 97-117 (CDGVECGPGKACRMLGGRPHC) form the Follistatin-like 1 domain. 2 Kazal-like domains span residues 111-167 (LGGR…RCQK) and 187-243 (SAHC…ICTG). A Follistatin-like 2 domain is found at 168 to 191 (SCAQVVCPRPQSCLVDQTGSAHCV). Cystine bridges form between Cys193–Cys227, Cys198–Cys220, and Cys209–Cys241. N-linked (GlcNAc...) asparagine glycosylation is present at Asn213.

As to quaternary structure, interacts with INHBA and INHBB. Interacts with FN1. Interacts with ADAM12. Interacts with MLLT10; the interaction enhances MLLT10 in vitro transcriptional activity and self-association. Interacts with MSTN. As to expression, abundantly expressed in heart, lung, kidney and testis. Continuously expressed in embryonic heart.

It is found in the secreted. It localises to the nucleus. Functionally, the secreted form is a binding and antagonizing protein for members of the TGF-beta family, such as activin, BMP2 and MSTN. Inhibits activin A-, activin B-, BMP2- and MSDT-induced cellular signaling; more effective on activin A than on activin B. Involved in bone formation; inhibits osteoclast differentiation. Involved in hematopoiesis; involved in differentiation of hemopoietic progenitor cells, increases hematopoietic cell adhesion to fibronectin and seems to contribute to the adhesion of hematopoietic precursor cells to the bone marrow stroma. The nuclear form is probably involved in transcriptional regulation via interaction with MLLT10. In Mus musculus (Mouse), this protein is Follistatin-related protein 3 (Fstl3).